The chain runs to 248 residues: Leucyl/phenylalanyl-tRNA--protein transferase (248 aa).

Belongs to the L/F-transferase family.

Its subcellular location is the cytoplasm. It catalyses the reaction N-terminal L-lysyl-[protein] + L-leucyl-tRNA(Leu) = N-terminal L-leucyl-L-lysyl-[protein] + tRNA(Leu) + H(+). The catalysed reaction is N-terminal L-arginyl-[protein] + L-leucyl-tRNA(Leu) = N-terminal L-leucyl-L-arginyl-[protein] + tRNA(Leu) + H(+). It carries out the reaction L-phenylalanyl-tRNA(Phe) + an N-terminal L-alpha-aminoacyl-[protein] = an N-terminal L-phenylalanyl-L-alpha-aminoacyl-[protein] + tRNA(Phe). Its function is as follows. Functions in the N-end rule pathway of protein degradation where it conjugates Leu, Phe and, less efficiently, Met from aminoacyl-tRNAs to the N-termini of proteins containing an N-terminal arginine or lysine. This Ralstonia pickettii (strain 12J) protein is Leucyl/phenylalanyl-tRNA--protein transferase.